We begin with the raw amino-acid sequence, 389 residues long: MQDINSGSSSMKDTYSSWIEISKRSLSNNLDNFRSILRPNSTLTAILKSNAYGHGIEPMTRLCIEAGISRIGVNSIEEALLIRNIDSKIPILIMGEIQNPEKRKDVLSDPNFWIVFSRPETARILSSFLPAPKLHLKIDTGMGRLGSHGETLKQTLSELKNVGITLGGICTHFASTEDVLEHKYSLMQTQKFEEAIFLAKSFGYNHLIRHACASASTMLFPNAHFDMVRIGISLYGLWPSIQTRLSLNLTGNKNFQLNPILSWKSRIVHIQYHPADSYIGYGSTFQTSYPTKVAIVPVGYYEGLDRKLSSNGDMLVLGKKARIIGRICMNMTMLDVTHIPGAEVGSIVTIIGQDGEESITADDLADRTHTINYEVMTRISESIPRIVVD.

The Proton acceptor; specific for D-alanine role is filled by lysine 48. Position 48 is an N6-(pyridoxal phosphate)lysine (lysine 48). Arginine 144 lines the substrate pocket. Tyrosine 281 (proton acceptor; specific for L-alanine) is an active-site residue. Methionine 329 is a binding site for substrate.

The protein belongs to the alanine racemase family. It depends on pyridoxal 5'-phosphate as a cofactor.

The enzyme catalyses L-alanine = D-alanine. It participates in amino-acid biosynthesis; D-alanine biosynthesis; D-alanine from L-alanine: step 1/1. Catalyzes the interconversion of L-alanine and D-alanine. May also act on other amino acids. This is Alanine racemase (alr) from Leptospira interrogans serogroup Icterohaemorrhagiae serovar Lai (strain 56601).